Reading from the N-terminus, the 486-residue chain is Siroheme synthase (486 aa).

A precorrin-2 dehydrogenase /sirohydrochlorin ferrochelatase region spans residues 1-204; sequence MNYLPIFVDL…HQIEQAEALV (204 aa). NAD(+) is bound by residues 22–23 and 43–44; these read HI and EK. S128 bears the Phosphoserine mark. Residues 216-486 form a uroporphyrinogen-III C-methyltransferase region; that stretch reads GEVSLVGAGP…NKETHWKQAA (271 aa). P225 contributes to the S-adenosyl-L-methionine binding site. D248 functions as the Proton acceptor in the catalytic mechanism. K270 acts as the Proton donor in catalysis. S-adenosyl-L-methionine contacts are provided by residues 301–303, V306, 331–332, M383, and G412; these read GGD and TA.

It in the N-terminal section; belongs to the precorrin-2 dehydrogenase / sirohydrochlorin ferrochelatase family. This sequence in the C-terminal section; belongs to the precorrin methyltransferase family.

The catalysed reaction is uroporphyrinogen III + 2 S-adenosyl-L-methionine = precorrin-2 + 2 S-adenosyl-L-homocysteine + H(+). The enzyme catalyses precorrin-2 + NAD(+) = sirohydrochlorin + NADH + 2 H(+). It carries out the reaction siroheme + 2 H(+) = sirohydrochlorin + Fe(2+). Its pathway is cofactor biosynthesis; adenosylcobalamin biosynthesis; precorrin-2 from uroporphyrinogen III: step 1/1. The protein operates within cofactor biosynthesis; adenosylcobalamin biosynthesis; sirohydrochlorin from precorrin-2: step 1/1. It participates in porphyrin-containing compound metabolism; siroheme biosynthesis; precorrin-2 from uroporphyrinogen III: step 1/1. It functions in the pathway porphyrin-containing compound metabolism; siroheme biosynthesis; siroheme from sirohydrochlorin: step 1/1. Its pathway is porphyrin-containing compound metabolism; siroheme biosynthesis; sirohydrochlorin from precorrin-2: step 1/1. In terms of biological role, multifunctional enzyme that catalyzes the SAM-dependent methylations of uroporphyrinogen III at position C-2 and C-7 to form precorrin-2 via precorrin-1. Then it catalyzes the NAD-dependent ring dehydrogenation of precorrin-2 to yield sirohydrochlorin. Finally, it catalyzes the ferrochelation of sirohydrochlorin to yield siroheme. The protein is Siroheme synthase of Actinobacillus pleuropneumoniae serotype 3 (strain JL03).